Here is a 123-residue protein sequence, read N- to C-terminus: Photosystem II extrinsic protein U (123 aa).

Positions 1–28 (MKTLARILVVFTLIVGLIGFFNPLPAQA) are cleaved as a signal peptide.

It belongs to the PsbU family. In terms of assembly, PSII is composed of 1 copy each of membrane proteins PsbA, PsbB, PsbC, PsbD, PsbE, PsbF, PsbH, PsbI, PsbJ, PsbK, PsbL, PsbM, PsbT, PsbX, PsbY, PsbZ, Psb30/Ycf12, peripheral proteins PsbO, CyanoQ (PsbQ), PsbU, PsbV and a large number of cofactors. It forms dimeric complexes.

Its subcellular location is the cellular thylakoid membrane. In terms of biological role, one of the extrinsic, lumenal subunits of photosystem II (PSII). PSII is a light-driven water plastoquinone oxidoreductase, using light energy to abstract electrons from H(2)O, generating a proton gradient subsequently used for ATP formation. The extrinsic proteins stabilize the structure of photosystem II oxygen-evolving complex (OEC), the ion environment of oxygen evolution and protect the OEC against heat-induced inactivation. This is Photosystem II extrinsic protein U from Gloeothece citriformis (strain PCC 7424) (Cyanothece sp. (strain PCC 7424)).